Here is a 314-residue protein sequence, read N- to C-terminus: Aspartate carbamoyltransferase catalytic subunit (314 aa).

Positions 63 and 64 each coordinate carbamoyl phosphate. L-aspartate is bound at residue lysine 91. Residues arginine 113, histidine 143, and glutamine 146 each coordinate carbamoyl phosphate. L-aspartate-binding residues include arginine 176 and arginine 228. Carbamoyl phosphate-binding residues include alanine 269 and proline 270.

The protein belongs to the aspartate/ornithine carbamoyltransferase superfamily. ATCase family. As to quaternary structure, heterododecamer (2C3:3R2) of six catalytic PyrB chains organized as two trimers (C3), and six regulatory PyrI chains organized as three dimers (R2).

It carries out the reaction carbamoyl phosphate + L-aspartate = N-carbamoyl-L-aspartate + phosphate + H(+). The protein operates within pyrimidine metabolism; UMP biosynthesis via de novo pathway; (S)-dihydroorotate from bicarbonate: step 2/3. Functionally, catalyzes the condensation of carbamoyl phosphate and aspartate to form carbamoyl aspartate and inorganic phosphate, the committed step in the de novo pyrimidine nucleotide biosynthesis pathway. This Cutibacterium acnes (strain DSM 16379 / KPA171202) (Propionibacterium acnes) protein is Aspartate carbamoyltransferase catalytic subunit.